We begin with the raw amino-acid sequence, 170 residues long: uncharacterized protein (170 aa).

One can recognise a Ferritin-like diiron domain in the interval 1–148; it reads MVKSQKVIDV…TIHDFFENAT (148 aa).

This is an uncharacterized protein from Ureaplasma parvum serovar 3 (strain ATCC 700970).